The chain runs to 404 residues: Proteasomal ubiquitin receptor ADRM1-A (404 aa).

Residues 17 to 130 (SSSKYLVEFR…RKLNEYLNNP (114 aa)) form the Pru domain. Over residues 195-247 (GSGGPTTSSSSSSSRSQSAAVTPSSTTSSTRTTSAPVAPAAAPATTPSPAVSS) the composition is skewed to low complexity. Disordered stretches follow at residues 195–258 (GSGG…TSPT) and 376–404 (FAKAMQSTSSQKERESSEKKEEEEDMSLD). Residues 248–258 (NDGASEATSPT) show a composition bias toward polar residues. Residues 278–390 (TGEGGQQVDL…QSTSSQKERE (113 aa)) enclose the DEUBAD domain. The span at 386–395 (QKERESSEKK) shows a compositional bias: basic and acidic residues.

It belongs to the ADRM1 family. Component of the 19S proteasome regulatory particle complex. The 26S proteasome consists of a 20S core particle (CP) and two 19S regulatory subunits (RP).

The protein localises to the cytoplasm. It is found in the nucleus. Component of the 26S proteasome, a multiprotein complex involved in the ATP-dependent degradation of ubiquitinated proteins. This complex plays a key role in the maintenance of protein homeostasis by removing misfolded or damaged proteins, which could impair cellular functions, and by removing proteins whose functions are no longer required. Therefore, the proteasome participates in numerous cellular processes, including cell cycle progression, apoptosis, or DNA damage repair. Within the complex, functions as a proteasomal ubiquitin receptor. The chain is Proteasomal ubiquitin receptor ADRM1-A (adrm1-a) from Xenopus laevis (African clawed frog).